We begin with the raw amino-acid sequence, 285 residues long: Acetyl-coenzyme A carboxylase carboxyl transferase subunit beta (285 aa).

In terms of domain architecture, CoA carboxyltransferase N-terminal spans 29–285; sequence IMTKCPNCKK…ILKIHQEVSN (257 aa). Zn(2+) contacts are provided by Cys-33, Cys-36, Cys-52, and Cys-55. Residues 33–55 form a C4-type zinc finger; the sequence is CPNCKKIMYTKELNENLNVCFNC.

This sequence belongs to the AccD/PCCB family. As to quaternary structure, acetyl-CoA carboxylase is a heterohexamer composed of biotin carboxyl carrier protein (AccB), biotin carboxylase (AccC) and two subunits each of ACCase subunit alpha (AccA) and ACCase subunit beta (AccD). It depends on Zn(2+) as a cofactor.

The protein localises to the cytoplasm. It carries out the reaction N(6)-carboxybiotinyl-L-lysyl-[protein] + acetyl-CoA = N(6)-biotinyl-L-lysyl-[protein] + malonyl-CoA. Its pathway is lipid metabolism; malonyl-CoA biosynthesis; malonyl-CoA from acetyl-CoA: step 1/1. Its function is as follows. Component of the acetyl coenzyme A carboxylase (ACC) complex. Biotin carboxylase (BC) catalyzes the carboxylation of biotin on its carrier protein (BCCP) and then the CO(2) group is transferred by the transcarboxylase to acetyl-CoA to form malonyl-CoA. This is Acetyl-coenzyme A carboxylase carboxyl transferase subunit beta from Staphylococcus epidermidis (strain ATCC 35984 / DSM 28319 / BCRC 17069 / CCUG 31568 / BM 3577 / RP62A).